A 299-amino-acid chain; its full sequence is Coenzyme PQQ synthesis protein B (299 aa).

The protein belongs to the PqqB family.

Its pathway is cofactor biosynthesis; pyrroloquinoline quinone biosynthesis. May be involved in the transport of PQQ or its precursor to the periplasm. The sequence is that of Coenzyme PQQ synthesis protein B from Methylorubrum extorquens (strain PA1) (Methylobacterium extorquens).